The following is a 207-amino-acid chain: NAD(P)H-quinone oxidoreductase subunit K, chloroplastic (207 aa).

[4Fe-4S] cluster is bound by residues C47, C48, C112, and C143.

The protein belongs to the complex I 20 kDa subunit family. NDH is composed of at least 16 different subunits, 5 of which are encoded in the nucleus. It depends on [4Fe-4S] cluster as a cofactor.

The protein localises to the plastid. The protein resides in the chloroplast thylakoid membrane. It catalyses the reaction a plastoquinone + NADH + (n+1) H(+)(in) = a plastoquinol + NAD(+) + n H(+)(out). It carries out the reaction a plastoquinone + NADPH + (n+1) H(+)(in) = a plastoquinol + NADP(+) + n H(+)(out). NDH shuttles electrons from NAD(P)H:plastoquinone, via FMN and iron-sulfur (Fe-S) centers, to quinones in the photosynthetic chain and possibly in a chloroplast respiratory chain. The immediate electron acceptor for the enzyme in this species is believed to be plastoquinone. Couples the redox reaction to proton translocation, and thus conserves the redox energy in a proton gradient. This Psilotum nudum (Whisk fern) protein is NAD(P)H-quinone oxidoreductase subunit K, chloroplastic.